Consider the following 386-residue polypeptide: mRNA-capping enzyme subunit beta (386 aa).

The disordered stretch occupies residues 1–137 (MDIGKMINDD…TTTITGCPPS (137 aa)). Polar residues-rich tracts occupy residues 20–32 (VKSLLNSPPTGLP) and 41–56 (KASSTSDLAQQLTNEM). Positions 57–67 (ESGEDDDDEDA) are enriched in acidic residues. The span at 93–115 (RHAERDHRPPPHRQDRRDPRMER) shows a compositional bias: basic and acidic residues.

This sequence belongs to the fungal TPase family. As to quaternary structure, heterodimer. The mRNA-capping enzyme is composed of two separate chains alpha and beta, respectively a mRNA guanylyltransferase and an mRNA 5'-triphosphate monophosphatase. Mg(2+) is required as a cofactor.

Its subcellular location is the nucleus. It catalyses the reaction a 5'-end triphospho-ribonucleoside in mRNA + H2O = a 5'-end diphospho-ribonucleoside in mRNA + phosphate + H(+). In terms of biological role, first step of mRNA capping. Converts the 5'-triphosphate end of a nascent mRNA chain into a diphosphate end. The sequence is that of mRNA-capping enzyme subunit beta (CET1) from Yarrowia lipolytica (strain CLIB 122 / E 150) (Yeast).